The sequence spans 105 residues: Putative regulatory protein COPRO5265_1186 (105 aa).

Residues 76 to 105 are disordered; it reads RLEEEEEEEERTEPITEQEAELEEESGEDV. Residues 78 to 105 are compositionally biased toward acidic residues; sequence EEEEEEEERTEPITEQEAELEEESGEDV.

It belongs to the RemA family.

This chain is Putative regulatory protein COPRO5265_1186, found in Coprothermobacter proteolyticus (strain ATCC 35245 / DSM 5265 / OCM 4 / BT).